The following is a 328-amino-acid chain: Transcriptional regulator protein Pur-beta-B (328 aa).

3 disordered regions span residues methionine 1–serine 35, serine 100–lysine 124, and glutamine 289–aspartate 328. Alanine 2 is subject to N-acetylalanine. Over residues glutamate 9 to serine 18 the composition is skewed to gly residues. Over residues methionine 24–serine 35 the composition is skewed to basic and acidic residues. The tract at residues glutamate 27–tyrosine 260 is DNA-binding. The span at glutamine 289 to glycine 303 shows a compositional bias: basic and acidic residues. The segment covering glutamate 304–glycine 317 has biased composition (gly residues). Acidic residues predominate over residues aspartate 318–aspartate 328.

The protein belongs to the PUR DNA-binding protein family.

It is found in the nucleus. In terms of biological role, transcriptional regulator which can act as an activator or a repressor. This is Transcriptional regulator protein Pur-beta-B (purb-b) from Xenopus laevis (African clawed frog).